A 155-amino-acid polypeptide reads, in one-letter code: Putative pre-16S rRNA nuclease (155 aa).

It belongs to the YqgF nuclease family.

It is found in the cytoplasm. Could be a nuclease involved in processing of the 5'-end of pre-16S rRNA. The chain is Putative pre-16S rRNA nuclease from Wolbachia sp. subsp. Brugia malayi (strain TRS).